A 166-amino-acid chain; its full sequence is NADH-quinone oxidoreductase subunit I (166 aa).

2 consecutive 4Fe-4S ferredoxin-type domains span residues 57-87 (LRRYPNGEERCIACKLCEAVCPALAITIESE) and 97-126 (TRYDIDMFKCINCGLCEESCPVDSIVVTPI). [4Fe-4S] cluster-binding residues include Cys-67, Cys-70, Cys-73, Cys-77, Cys-106, Cys-109, Cys-112, and Cys-116.

It belongs to the complex I 23 kDa subunit family. NDH-1 is composed of 14 different subunits. Subunits NuoA, H, J, K, L, M, N constitute the membrane sector of the complex. It depends on [4Fe-4S] cluster as a cofactor.

The protein resides in the cell inner membrane. It carries out the reaction a quinone + NADH + 5 H(+)(in) = a quinol + NAD(+) + 4 H(+)(out). NDH-1 shuttles electrons from NADH, via FMN and iron-sulfur (Fe-S) centers, to quinones in the respiratory chain. The immediate electron acceptor for the enzyme in this species is believed to be ubiquinone. Couples the redox reaction to proton translocation (for every two electrons transferred, four hydrogen ions are translocated across the cytoplasmic membrane), and thus conserves the redox energy in a proton gradient. The sequence is that of NADH-quinone oxidoreductase subunit I from Legionella pneumophila (strain Paris).